The following is a 436-amino-acid chain: Trigger factor (436 aa).

The PPIase FKBP-type domain maps to 161 to 246 (GMRVTMDFIG…LIKVEEQILP (86 aa)).

Belongs to the FKBP-type PPIase family. Tig subfamily.

It is found in the cytoplasm. The enzyme catalyses [protein]-peptidylproline (omega=180) = [protein]-peptidylproline (omega=0). In terms of biological role, involved in protein export. Acts as a chaperone by maintaining the newly synthesized protein in an open conformation. Functions as a peptidyl-prolyl cis-trans isomerase. This chain is Trigger factor, found in Aeromonas salmonicida (strain A449).